The following is an 85-amino-acid chain: Keratin-associated protein 7-1 (85 aa).

Positions 37–82 (GSPLGYGCNGYSSLGYGFGGSSFSNLGCGYGGSFYRPWGSGSGFGY) are 12 X 2 AA repeats of G-[YCGS].

It belongs to the KRTAP type 7 family. As to quaternary structure, interacts with wool keratins. In terms of tissue distribution, wool.

In terms of biological role, in the wool cortex, wool keratin intermediate filaments are embedded in an interfilamentous matrix, consisting of hair keratin-associated proteins (KRTAP), which are essential for the formation of a rigid and resistant wool shaft through their extensive disulfide bond cross-linking with abundant cysteine residues of wool keratins. The matrix proteins include the high-sulfur and high-glycine-tyrosine keratins. The polypeptide is Keratin-associated protein 7-1 (KRTAP7-1) (Ovis aries (Sheep)).